Consider the following 406-residue polypeptide: Zinc finger protein 793 (406 aa).

One can recognise a KRAB domain in the interval 8 to 79 (VSFKDVVVGF…EAACPGCHCW (72 aa)). C2H2-type zinc fingers lie at residues 227–249 (HVCS…QRSH), 255–277 (YGCT…QRIH), 283–305 (FECF…QRTH), 311–333 (FVCS…RKMH), 339–361 (YRCR…WRTH), and 367–389 (YGCN…QKIH).

It belongs to the krueppel C2H2-type zinc-finger protein family.

The protein localises to the nucleus. In terms of biological role, may be involved in transcriptional regulation. This Homo sapiens (Human) protein is Zinc finger protein 793 (ZNF793).